Here is a 767-residue protein sequence, read N- to C-terminus: MFAKLKKKIAEETAVAQRPGGATRIPRSVSKESVASMGADSGDDFASDGSSSREDLSSQLLRRNEQIRKLEARLSDYAEQVRNLQKIKEKLEIALEKHQDSSMRKFQEQNETFQANRAKMAEGLALALARKDQEWSEKMDQLEKEKNILTAQLQEMKNQSMNLFQRRDEMDELEGFQQQELSKIKHMLLKKEESLGKMEQELEARTRELSRTQEELMNSNQMSSDLSQKLEELQRHYSTLEEQRDHVIASKTGAESKITALEQKEQELQALIQQLSIDLQKVTAETQEKEDVITHLQEKVASLEKRLEQNLSGEEHLQELLKEKTLAEQNLEDTRQQLLAARSSQAKAINTLETRVRELEQTLQASEEQLQQSKGIVAAQETQIQELAAANQESSHVQQQALALEQQFLERTQALEAQIVALERTRAADQTTAEQGMRQLEQENAALKECRNEYERSLQNHQFELKKLKEEWSQREIVSVAMAQALEEVRKQREEFQQQAANLTAIIDEKEQNLREKTEVLLQKEQEILQLERGHNSALLQIHQLQAELEALRTLKAEEAAVVAEQEDLLRLRGPLQAEALSVNESHVTSRAMQDPVFQLPTAGRTPNGEVGAMDLTQLQKEKQDLEQQLLEKNKTIKQMQQRMLELRKTLQKELKIRPDNELFEVREKPGPEMANMAPSVTNNTDLTDAREINFEYLKHVVLKFMSCRESEAFHLIKAVSVLLNFSQEEENMLKETLEYKMSWFGSKPAPKGSIRPSISNPRIPWS.

The segment at 13 to 58 (TAVAQRPGGATRIPRSVSKESVASMGADSGDDFASDGSSSREDLSS) is disordered. Residues S30, S36, S41, S47, S50, and S51 each carry the phosphoserine modification. A coiled-coil region spans residues 50–657 (SSSREDLSSQ…RKTLQKELKI (608 aa)). The GRIP domain maps to 688–737 (TDAREINFEYLKHVVLKFMSCRESEAFHLIKAVSVLLNFSQEEENMLKET). The interval 748 to 767 (KPAPKGSIRPSISNPRIPWS) is disordered.

In terms of assembly, interacts with RAB6A. Directly interacts with TBC1D23. Interacts with FAM91A1; this interaction may be mediated by TBC1D23. Interacts with ARL1; this interaction recruits Golgin-97/GOLGA1 onto the Golgi apparatus. In terms of processing, MARylated by PARP12; MARylation is required for basolateral export of E-Cadherin.

It localises to the golgi apparatus membrane. The protein resides in the golgi apparatus. It is found in the trans-Golgi network membrane. Its subcellular location is the cytoplasmic vesicle. The protein localises to the secretory vesicle. It localises to the acrosome. Involved in vesicular trafficking at the Golgi apparatus level. Involved in endosome-to-Golgi trafficking. Mechanistically, captures transport vesicles arriving from endosomes via the protein TBC1D23. Recognized vesicles are then tethered to the trans-Golgi before subsequent SNARE engagement and vesicle fusion. Selectively regulates E-cadherin transport from the trans-Golgi network in tubulovesicular carriers. Its function is as follows. (Microbial infection) Plays an important role in poxvirus morphogenesis. Translocates into the viral factories where it may transport the membrane fragments and associated protein factors important for virus maturation to the sites of virion assembly. The protein is Golgin subfamily A member 1 (GOLGA1) of Homo sapiens (Human).